Reading from the N-terminus, the 483-residue chain is Glutamate--tRNA ligase (483 aa).

The short motif at 14–24 (PSPTGDPHVGT) is the 'HIGH' region element. A 'KMSKS' region motif is present at residues 253–257 (KISKR). ATP is bound at residue Lys256.

This sequence belongs to the class-I aminoacyl-tRNA synthetase family. Glutamate--tRNA ligase type 1 subfamily. In terms of assembly, monomer.

It is found in the cytoplasm. The catalysed reaction is tRNA(Glu) + L-glutamate + ATP = L-glutamyl-tRNA(Glu) + AMP + diphosphate. Its function is as follows. Catalyzes the attachment of glutamate to tRNA(Glu) in a two-step reaction: glutamate is first activated by ATP to form Glu-AMP and then transferred to the acceptor end of tRNA(Glu). In Deinococcus radiodurans (strain ATCC 13939 / DSM 20539 / JCM 16871 / CCUG 27074 / LMG 4051 / NBRC 15346 / NCIMB 9279 / VKM B-1422 / R1), this protein is Glutamate--tRNA ligase.